The primary structure comprises 247 residues: Serine protease 1 (247 aa).

A signal peptide spans 1 to 15 (MNPLLILTFVAAALA). Residues 16–23 (APFDDDDK) constitute a propeptide, activation peptide. Residues 24 to 244 (IVGGYNCEEN…YVKWIKNTIA (221 aa)) enclose the Peptidase S1 domain. Disulfide bonds link cysteine 30-cysteine 160, cysteine 48-cysteine 64, cysteine 139-cysteine 206, cysteine 171-cysteine 185, and cysteine 196-cysteine 220. The Charge relay system role is filled by histidine 63. The Ca(2+) site is built by glutamate 75, asparagine 77, valine 80, and glutamate 85. The active-site Charge relay system is the aspartate 107. Tyrosine 154 is subject to Sulfotyrosine. Serine 200 acts as the Charge relay system in catalysis.

This sequence belongs to the peptidase S1 family. In terms of assembly, interacts with SERPINA1. Ca(2+) serves as cofactor. In terms of processing, occurs in a single-chain form and a two-chain form, produced by proteolytic cleavage after Arg-122. Post-translationally, sulfation at Tyr-154 increases selectivity towards basic versus apolar residues at the P2' position of inhibitors that bind in a substrate-like fashion. Although the increase in selectivity is relatively small, it may facilitate digestion of a broader range of dietary proteins.

It is found in the secreted. The protein localises to the extracellular space. It catalyses the reaction Preferential cleavage: Arg-|-Xaa, Lys-|-Xaa.. Its function is as follows. Has activity against the synthetic substrates Boc-Phe-Ser-Arg-Mec, Boc-Leu-Thr-Arg-Mec, Boc-Gln-Ala-Arg-Mec and Boc-Val-Pro-Arg-Mec. The single-chain form is more active than the two-chain form against all of these substrates. The polypeptide is Serine protease 1 (Homo sapiens (Human)).